The following is a 203-amino-acid chain: Small ribosomal subunit protein uS4c (203 aa).

The disordered stretch occupies residues 15–42 (LGALPGLTSKRPRAGSDPRNQELSGNKS). One can recognise an S4 RNA-binding domain in the interval 89-150 (MRLDNILFRL…DQKSKAMIQN (62 aa)).

It belongs to the universal ribosomal protein uS4 family. In terms of assembly, part of the 30S ribosomal subunit. Contacts protein S5. The interaction surface between S4 and S5 is involved in control of translational fidelity.

The protein resides in the plastid. Its subcellular location is the chloroplast. In terms of biological role, one of the primary rRNA binding proteins, it binds directly to 16S rRNA where it nucleates assembly of the body of the 30S subunit. Its function is as follows. With S5 and S12 plays an important role in translational accuracy. The polypeptide is Small ribosomal subunit protein uS4c (rps4) (Oenothera elata subsp. hookeri (Hooker's evening primrose)).